Here is a 154-residue protein sequence, read N- to C-terminus: Calmodulin-like protein 6 (154 aa).

EF-hand domains are found at residues 1-36, 37-72, 77-112, and 115-150; these read MDST…LGII, IPED…IMVE, VGEE…LGLK, and KTLE…GRFF. Ca(2+)-binding residues include Asp-14, Asp-16, Asp-18, Lys-20, Glu-25, Asp-50, Asn-52, Asp-54, Cys-56, Glu-61, Asp-90, Asn-92, Asp-94, Glu-101, Asp-128, Asp-130, Asp-132, Arg-134, and Glu-139.

Belongs to the calmodulin family.

Functionally, potential calcium sensor. The sequence is that of Calmodulin-like protein 6 (CML6) from Arabidopsis thaliana (Mouse-ear cress).